The chain runs to 324 residues: 7,8-didemethyl-8-hydroxy-5-deazariboflavin synthase (324 aa).

The Radical SAM core domain maps to valine 4–asparagine 239. Positions 18, 22, and 25 each coordinate [4Fe-4S] cluster.

It belongs to the radical SAM superfamily. CofG family. Consists of two subunits, CofG and CofH. [4Fe-4S] cluster is required as a cofactor.

It catalyses the reaction 5-amino-5-(4-hydroxybenzyl)-6-(D-ribitylimino)-5,6-dihydrouracil + S-adenosyl-L-methionine = 7,8-didemethyl-8-hydroxy-5-deazariboflavin + 5'-deoxyadenosine + L-methionine + NH4(+) + H(+). Its pathway is cofactor biosynthesis; coenzyme F0 biosynthesis. Catalyzes the radical-mediated synthesis of 7,8-didemethyl-8-hydroxy-5-deazariboflavin from 5-amino-5-(4-hydroxybenzyl)-6-(D-ribitylimino)-5,6-dihydrouracil. The sequence is that of 7,8-didemethyl-8-hydroxy-5-deazariboflavin synthase from Archaeoglobus fulgidus (strain ATCC 49558 / DSM 4304 / JCM 9628 / NBRC 100126 / VC-16).